Here is a 475-residue protein sequence, read N- to C-terminus: Trifunctional enzyme subunit beta, mitochondrial (475 aa).

The transit peptide at 1–34 directs the protein to the mitochondrion; that stretch reads MTTILTYPFKNLPTASKWALRFSIRPLSCSSQLR. Lys-73 is modified (N6-acetyllysine; alternate). Lys-73 carries the post-translational modification N6-succinyllysine; alternate. Cys-139 (acyl-thioester intermediate) is an active-site residue. An intramembrane segment occupies 174 to 221; it reads IRHSRKMRKLMLDLNKAKSMGQRLSLISKFRFNFLAPELPAVSEFSTS. Position 189 is an N6-acetyllysine; alternate (Lys-189). Lys-189 carries the post-translational modification N6-succinyllysine; alternate. Lys-191, Lys-273, and Lys-292 each carry N6-succinyllysine. Residue Lys-294 is modified to N6-acetyllysine; alternate. Lys-294 is subject to N6-succinyllysine; alternate. The residue at position 299 (Lys-299) is an N6-acetyllysine. Lys-333 carries the N6-acetyllysine; alternate modification. Lys-333 is modified (N6-succinyllysine; alternate). An N6-acetyllysine mark is found at Lys-349 and Lys-362. Catalysis depends on Cys-459, which acts as the Proton donor/acceptor.

This sequence belongs to the thiolase-like superfamily. Thiolase family. As to quaternary structure, heterotetramer of 2 alpha/HADHA and 2 beta/HADHB subunits; forms the mitochondrial trifunctional enzyme. Also purified as higher order heterooligomers including a 4 alpha/HADHA and 4 beta/HADHB heterooligomer which physiological significance remains unclear. The mitochondrial trifunctional enzyme interacts with MTLN. Interacts with RSAD2/viperin.

Its subcellular location is the mitochondrion. The protein resides in the mitochondrion inner membrane. The protein localises to the mitochondrion outer membrane. It is found in the endoplasmic reticulum. The catalysed reaction is an acyl-CoA + acetyl-CoA = a 3-oxoacyl-CoA + CoA. It carries out the reaction butanoyl-CoA + acetyl-CoA = 3-oxohexanoyl-CoA + CoA. The enzyme catalyses hexanoyl-CoA + acetyl-CoA = 3-oxooctanoyl-CoA + CoA. It catalyses the reaction octanoyl-CoA + acetyl-CoA = 3-oxodecanoyl-CoA + CoA. The catalysed reaction is decanoyl-CoA + acetyl-CoA = 3-oxododecanoyl-CoA + CoA. It carries out the reaction dodecanoyl-CoA + acetyl-CoA = 3-oxotetradecanoyl-CoA + CoA. The enzyme catalyses tetradecanoyl-CoA + acetyl-CoA = 3-oxohexadecanoyl-CoA + CoA. It participates in lipid metabolism; fatty acid beta-oxidation. In terms of biological role, mitochondrial trifunctional enzyme catalyzes the last three of the four reactions of the mitochondrial beta-oxidation pathway. The mitochondrial beta-oxidation pathway is the major energy-producing process in tissues and is performed through four consecutive reactions breaking down fatty acids into acetyl-CoA. Among the enzymes involved in this pathway, the trifunctional enzyme exhibits specificity for long-chain fatty acids. Mitochondrial trifunctional enzyme is a heterotetrameric complex composed of two proteins, the trifunctional enzyme subunit alpha/HADHA carries the 2,3-enoyl-CoA hydratase and the 3-hydroxyacyl-CoA dehydrogenase activities, while the trifunctional enzyme subunit beta/HADHB described here bears the 3-ketoacyl-CoA thiolase activity. In Pan troglodytes (Chimpanzee), this protein is Trifunctional enzyme subunit beta, mitochondrial (HADHB).